A 188-amino-acid polypeptide reads, in one-letter code: UPF0397 protein LACR_0367 (188 aa).

5 helical membrane passes run I14–I34, A48–I68, A80–V100, I120–L140, and Q152–L172.

This sequence belongs to the UPF0397 family.

The protein localises to the cell membrane. The sequence is that of UPF0397 protein LACR_0367 from Lactococcus lactis subsp. cremoris (strain SK11).